We begin with the raw amino-acid sequence, 215 residues long: Adenylate kinase (215 aa).

10–15 lines the ATP pocket; it reads GAGKGT. Residues 30-59 form an NMP region; the sequence is STGDMFRAAMKNETEMGKLAKSFIDKGELV. Residues T31, R36, 57–59, 86–89, and Q93 each bind AMP; these read ELV and GYPR. Residues 127–165 form an LID region; sequence GRYICRNCGATYHKIFNPTKVEGTCDVCGSHDLYQRADD. R128 lines the ATP pocket. Zn(2+)-binding residues include C131 and C134. Residue 137–138 coordinates ATP; it reads TY. Residues C151 and C154 each coordinate Zn(2+). Residues R162 and R173 each contribute to the AMP site. Q201 serves as a coordination point for ATP.

The protein belongs to the adenylate kinase family. In terms of assembly, monomer.

The protein resides in the cytoplasm. It carries out the reaction AMP + ATP = 2 ADP. It functions in the pathway purine metabolism; AMP biosynthesis via salvage pathway; AMP from ADP: step 1/1. Catalyzes the reversible transfer of the terminal phosphate group between ATP and AMP. Plays an important role in cellular energy homeostasis and in adenine nucleotide metabolism. The sequence is that of Adenylate kinase from Lactococcus lactis subsp. cremoris (strain SK11).